The following is a 339-amino-acid chain: Phenylalanine--tRNA ligase alpha subunit (339 aa).

Glu254 lines the Mg(2+) pocket.

Belongs to the class-II aminoacyl-tRNA synthetase family. Phe-tRNA synthetase alpha subunit type 1 subfamily. As to quaternary structure, tetramer of two alpha and two beta subunits. Requires Mg(2+) as cofactor.

It is found in the cytoplasm. The catalysed reaction is tRNA(Phe) + L-phenylalanine + ATP = L-phenylalanyl-tRNA(Phe) + AMP + diphosphate + H(+). The protein is Phenylalanine--tRNA ligase alpha subunit of Clostridium perfringens (strain SM101 / Type A).